The chain runs to 181 residues: Adenine phosphoribosyltransferase (181 aa).

This sequence belongs to the purine/pyrimidine phosphoribosyltransferase family. Homodimer.

It localises to the cytoplasm. The enzyme catalyses AMP + diphosphate = 5-phospho-alpha-D-ribose 1-diphosphate + adenine. It participates in purine metabolism; AMP biosynthesis via salvage pathway; AMP from adenine: step 1/1. Its function is as follows. Catalyzes a salvage reaction resulting in the formation of AMP, that is energically less costly than de novo synthesis. This chain is Adenine phosphoribosyltransferase, found in Neorhizobium galegae (Rhizobium galegae).